The sequence spans 254 residues: Indole-3-glycerol phosphate synthase (254 aa).

It belongs to the TrpC family.

The enzyme catalyses 1-(2-carboxyphenylamino)-1-deoxy-D-ribulose 5-phosphate + H(+) = (1S,2R)-1-C-(indol-3-yl)glycerol 3-phosphate + CO2 + H2O. It participates in amino-acid biosynthesis; L-tryptophan biosynthesis; L-tryptophan from chorismate: step 4/5. In Methanopyrus kandleri (strain AV19 / DSM 6324 / JCM 9639 / NBRC 100938), this protein is Indole-3-glycerol phosphate synthase.